Consider the following 469-residue polypeptide: E3 ubiquitin-protein ligase pellino homolog 3 (469 aa).

Residues 1-39 (MVLEGNPEVGSPRTSDLQHRGNKGSCVLSSPGEDAQPGE) form a disordered region. A Phosphoserine modification is found at Ser-11.

The protein belongs to the pellino family. As to quaternary structure, interacts with TRAF6, MAP3K14 and MAP3K7. In terms of processing, phosphorylated by IRAK1 enhancing its E3 ligase activity. In terms of tissue distribution, highly expressed in brain, heart and testis, and at lower level in kidney, liver, lung, placenta, small intestine, spleen and stomach. Isoform 1 is not expressed in lung.

It carries out the reaction S-ubiquitinyl-[E2 ubiquitin-conjugating enzyme]-L-cysteine + [acceptor protein]-L-lysine = [E2 ubiquitin-conjugating enzyme]-L-cysteine + N(6)-ubiquitinyl-[acceptor protein]-L-lysine.. It functions in the pathway protein modification; protein ubiquitination. Functionally, E3 ubiquitin ligase catalyzing the covalent attachment of ubiquitin moieties onto substrate proteins. Involved in the TLR and IL-1 signaling pathways via interaction with the complex containing IRAK kinases and TRAF6. Mediates 'Lys-63'-linked polyubiquitination of IRAK1. Can activate AP1/JUN and ELK1. Acts as a regulator of innate immunity by mediating 'Lys-63'-linked polyubiquitination of RIPK2 downstream of NOD1 and NOD2, thereby transforming RIPK2 into a scaffolding protein for downstream effectors, ultimately leading to activation of the NF-kappa-B and MAP kinases signaling. Catalyzes 'Lys-63'-linked polyubiquitination of RIPK2 in parallel of XIAP. In Homo sapiens (Human), this protein is E3 ubiquitin-protein ligase pellino homolog 3.